We begin with the raw amino-acid sequence, 118 residues long: NADH-ubiquinone oxidoreductase chain 3 (118 aa).

3 helical membrane-spanning segments follow: residues I9–A29, L62–V82, and I87–L107.

The protein belongs to the complex I subunit 3 family.

The protein resides in the mitochondrion membrane. It carries out the reaction a ubiquinone + NADH + 5 H(+)(in) = a ubiquinol + NAD(+) + 4 H(+)(out). Core subunit of the mitochondrial membrane respiratory chain NADH dehydrogenase (Complex I) that is believed to belong to the minimal assembly required for catalysis. Complex I functions in the transfer of electrons from NADH to the respiratory chain. The immediate electron acceptor for the enzyme is believed to be ubiquinone. The polypeptide is NADH-ubiquinone oxidoreductase chain 3 (NAD3) (Pinus sylvestris (Scotch pine)).